A 189-amino-acid polypeptide reads, in one-letter code: Peptidyl-tRNA hydrolase (189 aa).

Tyr-15 provides a ligand contact to tRNA. His-20 (proton acceptor) is an active-site residue. TRNA-binding residues include Tyr-65, Asn-67, and Asn-113.

This sequence belongs to the PTH family. Monomer.

It localises to the cytoplasm. The enzyme catalyses an N-acyl-L-alpha-aminoacyl-tRNA + H2O = an N-acyl-L-amino acid + a tRNA + H(+). Functionally, hydrolyzes ribosome-free peptidyl-tRNAs (with 1 or more amino acids incorporated), which drop off the ribosome during protein synthesis, or as a result of ribosome stalling. In terms of biological role, catalyzes the release of premature peptidyl moieties from peptidyl-tRNA molecules trapped in stalled 50S ribosomal subunits, and thus maintains levels of free tRNAs and 50S ribosomes. The chain is Peptidyl-tRNA hydrolase from Caldicellulosiruptor bescii (strain ATCC BAA-1888 / DSM 6725 / KCTC 15123 / Z-1320) (Anaerocellum thermophilum).